The following is a 141-amino-acid chain: 3-hydroxyacyl-[acyl-carrier-protein] dehydratase FabZ (141 aa).

Residue H47 is part of the active site.

The protein belongs to the thioester dehydratase family. FabZ subfamily.

Its subcellular location is the cytoplasm. The catalysed reaction is a (3R)-hydroxyacyl-[ACP] = a (2E)-enoyl-[ACP] + H2O. Functionally, involved in unsaturated fatty acids biosynthesis. Catalyzes the dehydration of short chain beta-hydroxyacyl-ACPs and long chain saturated and unsaturated beta-hydroxyacyl-ACPs. The chain is 3-hydroxyacyl-[acyl-carrier-protein] dehydratase FabZ from Caldanaerobacter subterraneus subsp. tengcongensis (strain DSM 15242 / JCM 11007 / NBRC 100824 / MB4) (Thermoanaerobacter tengcongensis).